We begin with the raw amino-acid sequence, 295 residues long: ATP synthase gamma chain (295 aa).

Belongs to the ATPase gamma chain family. As to quaternary structure, F-type ATPases have 2 components, CF(1) - the catalytic core - and CF(0) - the membrane proton channel. CF(1) has five subunits: alpha(3), beta(3), gamma(1), delta(1), epsilon(1). CF(0) has three main subunits: a, b and c.

It is found in the cell inner membrane. In terms of biological role, produces ATP from ADP in the presence of a proton gradient across the membrane. The gamma chain is believed to be important in regulating ATPase activity and the flow of protons through the CF(0) complex. The sequence is that of ATP synthase gamma chain from Campylobacter concisus (strain 13826).